A 456-amino-acid chain; its full sequence is Gamma-aminobutyric acid receptor subunit alpha-1 (456 aa).

An N-terminal signal peptide occupies residues 1 to 27 (MRKSPGLSDYLWAWILLLSTLTGRSYG). The Extracellular portion of the chain corresponds to 28–253 (QPSLQDELKD…FHLKRKIGYF (226 aa)). Residue Asn-38 is glycosylated (N-linked (GlcNAc...) asparagine). Arg-94 contributes to the 4-aminobutanoate binding site. A glycan (N-linked (GlcNAc...) asparagine) is linked at Asn-138. Thr-157 serves as a coordination point for 4-aminobutanoate. An intrachain disulfide couples Cys-166 to Cys-180. The chain crosses the membrane as a helical span at residues 254–274 (VIQTYLPCIMTVILSQVSFWL). The Cytoplasmic portion of the chain corresponds to 275 to 279 (NRESV). The chain crosses the membrane as a helical span at residues 280 to 301 (PARTVFGVTTVLTMTTLSISAR). At 302 to 311 (NSLPKVAYAT) the chain is on the extracellular side. A helical membrane pass occupies residues 312-333 (AMDWFIAVCYAFVFSALIEFAT). The Cytoplasmic portion of the chain corresponds to 334 to 421 (VNYFTKRGYA…TFNSVSKIDR (88 aa)). Residues 422–441 (LSRIAFPLLFGIFNLVYWAT) form a helical membrane-spanning segment. The Extracellular portion of the chain corresponds to 442–456 (YLNREPQLKAPTPHQ).

Belongs to the ligand-gated ion channel (TC 1.A.9) family. Gamma-aminobutyric acid receptor (TC 1.A.9.5) subfamily. GABRA1 sub-subfamily. As to quaternary structure, heteropentamer, formed by a combination of alpha (GABRA1-6), beta (GABRB1-3), gamma (GABRG1-3), delta (GABRD), epsilon (GABRE), rho (GABRR1-3), pi (GABRP) and theta (GABRQ) subunits, each subunit exhibiting distinct physiological and pharmacological properties. Interacts with UBQLN1. Interacts with TRAK1. Interacts with KIF21B. Identified in a complex of 720 kDa composed of LHFPL4, NLGN2, GABRA1, GABRB2, GABRG2 and GABRB3. Interacts with LHFPL4. Interacts with NLGN2. Interacts with SHISA7; interaction leads to the regulation of GABA(A) receptor trafficking, channel deactivation kinetics and pharmacology.

Its subcellular location is the postsynaptic cell membrane. It localises to the cell membrane. The protein localises to the cytoplasmic vesicle membrane. The enzyme catalyses chloride(in) = chloride(out). Allosterically activated by benzodiazepines, the neuroanesthetic alphaxalone and pentobarbital. Inhibited by the antagonist bicuculline. Potentiated by histamine. Its function is as follows. Alpha subunit of the heteropentameric ligand-gated chloride channel gated by gamma-aminobutyric acid (GABA), a major inhibitory neurotransmitter in the brain. GABA-gated chloride channels, also named GABA(A) receptors (GABAAR), consist of five subunits arranged around a central pore and contain GABA active binding site(s) located at the alpha and beta subunit interface(s). When activated by GABA, GABAARs selectively allow the flow of chloride anions across the cell membrane down their electrochemical gradient. Alpha-1/GABRA1-containing GABAARs are largely synaptic. Chloride influx into the postsynaptic neuron following GABAAR opening decreases the neuron ability to generate a new action potential, thereby reducing nerve transmission. GABAARs containing alpha-1 and beta-2 or -3 subunits exhibit synaptogenic activity; the gamma-2 subunit being necessary but not sufficient to induce rapid synaptic contacts formation. GABAARs function also as histamine receptor where histamine binds at the interface of two neighboring beta subunits and potentiates GABA response. GABAARs containing alpha, beta and epsilon subunits also permit spontaneous chloride channel activity while preserving the structural information required for GABA-gated openings. Alpha-1-mediated plasticity in the orbitofrontal cortex regulates context-dependent action selection. Together with rho subunits, may also control neuronal and glial GABAergic transmission in the cerebellum. The sequence is that of Gamma-aminobutyric acid receptor subunit alpha-1 (GABRA1) from Macaca fascicularis (Crab-eating macaque).